The sequence spans 430 residues: Histidinol dehydrogenase (430 aa).

NAD(+) contacts are provided by tyrosine 129, glutamine 190, and asparagine 213. The substrate site is built by serine 236, glutamine 258, and histidine 261. Zn(2+) contacts are provided by glutamine 258 and histidine 261. Residues glutamate 326 and histidine 327 each act as proton acceptor in the active site. Residues histidine 327, aspartate 360, glutamate 414, and histidine 419 each coordinate substrate. Residue aspartate 360 coordinates Zn(2+). Histidine 419 lines the Zn(2+) pocket.

This sequence belongs to the histidinol dehydrogenase family. The cofactor is Zn(2+).

The enzyme catalyses L-histidinol + 2 NAD(+) + H2O = L-histidine + 2 NADH + 3 H(+). It participates in amino-acid biosynthesis; L-histidine biosynthesis; L-histidine from 5-phospho-alpha-D-ribose 1-diphosphate: step 9/9. Catalyzes the sequential NAD-dependent oxidations of L-histidinol to L-histidinaldehyde and then to L-histidine. The sequence is that of Histidinol dehydrogenase from Gluconobacter oxydans (strain 621H) (Gluconobacter suboxydans).